Consider the following 360-residue polypeptide: MTEKDSNVEESVLEVEQASQVELDSEQISPAEKESVLAEEKEFSTDVDIPEMTAPDDEKSAFFEQWKARHQAYLAHKDEADIQAVDEGQTEQEIPEAKKSKRVLFQGIERKTESLKSKKETGEKVQTLKVDIPSKVVWKAIPVLVTSLLLAALALYFISPTSKKKQIEVVGNERLTAEQVENYSLISPDDYNVTIALHADAYAKNIKKNSSSVETATIKFQFPATFTIHIKEYAIIGYIQQQSQWYPVLSSGEIGGEPISQDSLPEDYTTINLSDKELIKELAIELGKIDAGIRSAIQTINLPPSKVTADLLTFNMRDGNTVLVPLSEISQKVSYYTKIAAEVTVPTTIDMEVGIYRYAS.

The interval 1 to 54 is disordered; it reads MTEKDSNVEESVLEVEQASQVELDSEQISPAEKESVLAEEKEFSTDVDIPEMTA. At 1–139 the chain is on the cytoplasmic side; that stretch reads MTEKDSNVEE…VDIPSKVVWK (139 aa). Polar residues predominate over residues 17–28; the sequence is QASQVELDSEQI. Over residues 31–44 the composition is skewed to basic and acidic residues; it reads AEKESVLAEEKEFS. The chain crosses the membrane as a helical span at residues 140–160; the sequence is AIPVLVTSLLLAALALYFISP. Over 161 to 360 the chain is Extracellular; it reads TSKKKQIEVV…MEVGIYRYAS (200 aa). The region spanning 162 to 233 is the POTRA domain; the sequence is SKKKQIEVVG…ATFTIHIKEY (72 aa).

This sequence belongs to the FtsQ/DivIB family. DivIB subfamily.

The protein localises to the cell membrane. Functionally, cell division protein that may be involved in stabilizing or promoting the assembly of the division complex. This Streptococcus suis (strain GZ1) protein is Cell division protein DivIB.